We begin with the raw amino-acid sequence, 166 residues long: Heme-degrading monooxygenase HmoB (166 aa).

Asn33 provides a ligand contact to Fe cation. An ABM domain is found at 66 to 153; the sequence is FAVLNNIAVT…SAGIDTTSIF (88 aa). His138 provides a ligand contact to heme.

Belongs to the antibiotic biosynthesis monooxygenase family. Homodimer.

It is found in the cytoplasm. The catalysed reaction is heme b + 3 reduced [NADPH--hemoprotein reductase] + 3 O2 = biliverdin IXalpha + CO + Fe(2+) + 3 oxidized [NADPH--hemoprotein reductase] + 3 H2O + H(+). Functionally, catalyzes the oxidative degradation of the heme macrocyclic porphyrin ring in the presence of a suitable electron donor such as ascorbate or NADPH--cytochrome P450 reductase, with subsequent release of free iron. The polypeptide is Heme-degrading monooxygenase HmoB (hmoB) (Bacillus subtilis (strain 168)).